We begin with the raw amino-acid sequence, 525 residues long: Lysine--tRNA ligase (525 aa).

A 'HIGH' region motif is present at residues A40 to S48. Residues K295–S299 carry the 'KMSKS' region motif. K298 provides a ligand contact to ATP.

Belongs to the class-I aminoacyl-tRNA synthetase family.

The protein localises to the cytoplasm. It catalyses the reaction tRNA(Lys) + L-lysine + ATP = L-lysyl-tRNA(Lys) + AMP + diphosphate. This Cenarchaeum symbiosum (strain A) protein is Lysine--tRNA ligase (lysS).